The chain runs to 254 residues: tRNA (guanine-N(1)-)-methyltransferase (254 aa).

Residues glycine 119 and 139–144 (IGDFVL) each bind S-adenosyl-L-methionine.

Belongs to the RNA methyltransferase TrmD family. In terms of assembly, homodimer.

Its subcellular location is the cytoplasm. The catalysed reaction is guanosine(37) in tRNA + S-adenosyl-L-methionine = N(1)-methylguanosine(37) in tRNA + S-adenosyl-L-homocysteine + H(+). Its function is as follows. Specifically methylates guanosine-37 in various tRNAs. The protein is tRNA (guanine-N(1)-)-methyltransferase of Dechloromonas aromatica (strain RCB).